We begin with the raw amino-acid sequence, 269 residues long: JmjC domain-containing protein 8 (269 aa).

The N-terminal stretch at 1–24 (MAAAGRRGLLLLFVLWMMVTVILP) is a signal peptide. 3 N-linked (GlcNAc...) asparagine glycosylation sites follow: Asn-135, Asn-145, and Asn-214. The JmjC domain occupies 136-269 (DTLYFFGDNN…TSVFISTFLG (134 aa)).

Oligomer. Dimer. Interacts with PKM; regulates angiogenesis and metabolism. In terms of processing, N-glycosylated.

The protein resides in the endoplasmic reticulum lumen. It is found in the cytoplasm. Its function is as follows. Functions as a positive regulator of TNF-induced NF-kappaB signaling. Regulates angiogenesis and cellular metabolism through interaction with PKM. The sequence is that of JmjC domain-containing protein 8 from Mus musculus (Mouse).